The sequence spans 572 residues: Sorting nexin 2B (572 aa).

2 disordered regions span residues 1 to 97 (MMGS…SSYL) and 114 to 136 (SEIN…SPSS). A compositionally biased stretch (basic and acidic residues) spans 9–30 (ESHLHSSKEEMEKLFLREDGDP). Residues 32–53 (TKSNVNGDKSNSNYRSAMSTLF) are compositionally biased toward polar residues. Residues 124-136 (SQSSDSLSRSPSS) are compositionally biased toward low complexity. Ser133 is subject to Phosphoserine. Residues 147 to 266 (SNPQKEQEAT…KVFLQAQGKL (120 aa)) form the PX domain. 3 residues coordinate a 1,2-diacyl-sn-glycero-3-phospho-(1D-myo-inositol-3-phosphate): Arg190, Lys216, and Arg233. The 255-residue stretch at 318–572 (LRQSVSNDWG…ETRQYDRESS (255 aa)) folds into the BAR domain.

Belongs to the sorting nexin family. As to quaternary structure, homodimer. Heterodimer with SNX1 or SNX2B. Component of the retromer complex which consists of VPS29 (MAG1), VPS26 (VPS26A or VPS26B), VPS35 (VPS35A or VPS35B or VPS35C), VPS5/17 (SNX1 or SNX2A or SNX2B). Ubiquitously expressed.

Its subcellular location is the cytoplasm. The protein resides in the endosome membrane. It is found in the prevacuolar compartment membrane. It localises to the golgi apparatus. The protein localises to the trans-Golgi network membrane. Functionally, plays a role in vesicular protein sorting. Acts at the crossroads between the secretory and endocytic pathways. Is involved in the endosome to vacuole protein transport and, as component of the membrane-associated retromer complex, is also involved in endosome-to-Golgi retrograde transport. The sequence is that of Sorting nexin 2B (SNX2B) from Arabidopsis thaliana (Mouse-ear cress).